Reading from the N-terminus, the 411-residue chain is Probable glutamate dehydrogenase 3 (411 aa).

Lys-102 is a catalytic residue.

This sequence belongs to the Glu/Leu/Phe/Val dehydrogenases family.

The catalysed reaction is L-glutamate + NAD(+) + H2O = 2-oxoglutarate + NH4(+) + NADH + H(+). The enzyme catalyses L-glutamate + NADP(+) + H2O = 2-oxoglutarate + NH4(+) + NADPH + H(+). This chain is Probable glutamate dehydrogenase 3 (GSH3), found in Arabidopsis thaliana (Mouse-ear cress).